Here is a 268-residue protein sequence, read N- to C-terminus: Glutamate racemase (268 aa).

Substrate is bound by residues 10-11 (DS) and 42-43 (YG). C73 acts as the Proton donor/acceptor in catalysis. 74–75 (NT) provides a ligand contact to substrate. The Proton donor/acceptor role is filled by C184. 185-186 (TH) lines the substrate pocket.

Belongs to the aspartate/glutamate racemases family.

It carries out the reaction L-glutamate = D-glutamate. It participates in cell wall biogenesis; peptidoglycan biosynthesis. Functionally, provides the (R)-glutamate required for cell wall biosynthesis. This chain is Glutamate racemase, found in Limosilactobacillus fermentum (strain NBRC 3956 / LMG 18251) (Lactobacillus fermentum).